A 229-amino-acid chain; its full sequence is DNA mismatch repair protein MutH (229 aa).

The protein belongs to the MutH family.

Its subcellular location is the cytoplasm. Its function is as follows. Sequence-specific endonuclease that cleaves unmethylated GATC sequences. It is involved in DNA mismatch repair. The polypeptide is DNA mismatch repair protein MutH (Shigella dysenteriae serotype 1 (strain Sd197)).